Reading from the N-terminus, the 160-residue chain is Probable chemoreceptor glutamine deamidase CheD 2 (160 aa).

This sequence belongs to the CheD family.

It catalyses the reaction L-glutaminyl-[protein] + H2O = L-glutamyl-[protein] + NH4(+). Its function is as follows. Probably deamidates glutamine residues to glutamate on methyl-accepting chemotaxis receptors (MCPs), playing an important role in chemotaxis. The chain is Probable chemoreceptor glutamine deamidase CheD 2 from Geobacter sulfurreducens (strain ATCC 51573 / DSM 12127 / PCA).